The following is a 305-amino-acid chain: Glutaminase (305 aa).

Serine 61, asparagine 113, glutamate 158, asparagine 165, tyrosine 189, tyrosine 241, and valine 259 together coordinate substrate.

This sequence belongs to the glutaminase family. As to quaternary structure, homotetramer.

The enzyme catalyses L-glutamine + H2O = L-glutamate + NH4(+). The sequence is that of Glutaminase from Clostridium botulinum (strain Kyoto / Type A2).